A 212-amino-acid polypeptide reads, in one-letter code: Thiamine-phosphate synthase (212 aa).

4-amino-2-methyl-5-(diphosphooxymethyl)pyrimidine contacts are provided by residues 40–44 and Asn-75; that span reads QFREK. The Mg(2+) site is built by Asp-76 and Asp-95. Ser-113 lines the 4-amino-2-methyl-5-(diphosphooxymethyl)pyrimidine pocket. 139–141 is a 2-[(2R,5Z)-2-carboxy-4-methylthiazol-5(2H)-ylidene]ethyl phosphate binding site; the sequence is TSS. Lys-142 provides a ligand contact to 4-amino-2-methyl-5-(diphosphooxymethyl)pyrimidine. 2-[(2R,5Z)-2-carboxy-4-methylthiazol-5(2H)-ylidene]ethyl phosphate-binding positions include Gly-171 and 191 to 192; that span reads IS.

This sequence belongs to the thiamine-phosphate synthase family. Mg(2+) serves as cofactor.

The enzyme catalyses 2-[(2R,5Z)-2-carboxy-4-methylthiazol-5(2H)-ylidene]ethyl phosphate + 4-amino-2-methyl-5-(diphosphooxymethyl)pyrimidine + 2 H(+) = thiamine phosphate + CO2 + diphosphate. It carries out the reaction 2-(2-carboxy-4-methylthiazol-5-yl)ethyl phosphate + 4-amino-2-methyl-5-(diphosphooxymethyl)pyrimidine + 2 H(+) = thiamine phosphate + CO2 + diphosphate. It catalyses the reaction 4-methyl-5-(2-phosphooxyethyl)-thiazole + 4-amino-2-methyl-5-(diphosphooxymethyl)pyrimidine + H(+) = thiamine phosphate + diphosphate. It functions in the pathway cofactor biosynthesis; thiamine diphosphate biosynthesis; thiamine phosphate from 4-amino-2-methyl-5-diphosphomethylpyrimidine and 4-methyl-5-(2-phosphoethyl)-thiazole: step 1/1. Functionally, condenses 4-methyl-5-(beta-hydroxyethyl)thiazole monophosphate (THZ-P) and 2-methyl-4-amino-5-hydroxymethyl pyrimidine pyrophosphate (HMP-PP) to form thiamine monophosphate (TMP). This Staphylococcus epidermidis (strain ATCC 35984 / DSM 28319 / BCRC 17069 / CCUG 31568 / BM 3577 / RP62A) protein is Thiamine-phosphate synthase.